Consider the following 197-residue polypeptide: Protein shisa-4 (197 aa).

A signal peptide spans 1 to 27 (MPPAGLRRAAPLTAIALLVLGAPLVLA). Residues 28–87 (GEDCLWYLDRNGSWHPGFNCEFFTFCCGTCYHRYCCRDLTLLITERQQKHCLAFSPKTIA) lie on the Extracellular side of the membrane. A helical membrane pass occupies residues 88 to 108 (GIASAVILFVAVVATTICCFL). The Cytoplasmic portion of the chain corresponds to 109–197 (CSCCYLYRRR…MPPQPSYPGA (89 aa)).

The protein belongs to the shisa family.

It localises to the membrane. This chain is Protein shisa-4 (SHISA4), found in Homo sapiens (Human).